We begin with the raw amino-acid sequence, 376 residues long: Peroxisomal membrane protein PEX14 (376 aa).

Residues 1 to 12 (MASSEQAEQPNQ) show a composition bias toward polar residues. The disordered stretch occupies residues 1–24 (MASSEQAEQPNQPSSPPGSENVVP). N-acetylalanine is present on alanine 2. The Peroxisomal segment spans residues 2–108 (ASSEQAEQPN…YSPRGSRWRD (107 aa)). Lysine 34 is modified (N6-acetyllysine). The tract at residues 70–102 (SGTAADEPSPLGPATPVVPVQPPHLTPQPYSPR) is disordered. The segment covering 88–99 (PVQPPHLTPQPY) has biased composition (pro residues). A helical transmembrane segment spans residues 109–127 (YGALAIIMAGIAFGFHQLY). At 128–376 (KRYLLPLILG…EGASNETERD (249 aa)) the chain is on the cytoplasmic side. Residues 230–376 (PPSPSAPKIP…EGASNETERD (147 aa)) form a disordered region. Serine 232 is subject to Phosphoserine. Composition is skewed to low complexity over residues 247–259 (SSSP…VNHH) and 265–275 (SPVSNESTSSS). Serine 282 and serine 334 each carry phosphoserine. The segment covering 323 to 341 (KEDEDDEDDDVSHVDEEDV) has biased composition (acidic residues). Residues 359 to 376 (QVEKLRRPEGASNETERD) are compositionally biased toward basic and acidic residues.

This sequence belongs to the peroxin-14 family. As to quaternary structure, interacts with PEX13; forming the PEX13-PEX14 docking complex. Interacts with PEX5 (via WxxxF/Y motifs). Interacts with PEX19. Interacts with tubulin.

It is found in the peroxisome membrane. In terms of biological role, component of the PEX13-PEX14 docking complex, a translocon channel that specifically mediates the import of peroxisomal cargo proteins bound to PEX5 receptor. The PEX13-PEX14 docking complex forms a large import pore which can be opened to a diameter of about 9 nm. Mechanistically, PEX5 receptor along with cargo proteins associates with the PEX14 subunit of the PEX13-PEX14 docking complex in the cytosol, leading to the insertion of the receptor into the organelle membrane with the concomitant translocation of the cargo into the peroxisome matrix. Plays a key role for peroxisome movement through a direct interaction with tubulin. This is Peroxisomal membrane protein PEX14 from Mus musculus (Mouse).